Here is a 295-residue protein sequence, read N- to C-terminus: Methionine aminopeptidase (295 aa).

A substrate-binding site is contributed by His63. Residues Asp83, Asp94, and His154 each coordinate a divalent metal cation. His162 serves as a coordination point for substrate. Glu188 and Glu281 together coordinate a divalent metal cation.

The protein belongs to the peptidase M24A family. Methionine aminopeptidase archaeal type 2 subfamily. Monomer. Fe(2+) is required as a cofactor. Co(2+) serves as cofactor. Requires Ni(2+) as cofactor. It depends on Mn(2+) as a cofactor.

The catalysed reaction is Release of N-terminal amino acids, preferentially methionine, from peptides and arylamides.. In terms of biological role, removes the N-terminal methionine from nascent proteins. The N-terminal methionine is often cleaved when the second residue in the primary sequence is small and uncharged (Met-Ala-, Cys, Gly, Pro, Ser, Thr, or Val). This is Methionine aminopeptidase from Thermococcus onnurineus (strain NA1).